The chain runs to 472 residues: MEKGLALPQDFRDLVHSLKIRGRYVLFLAFVVIVFIFIEKENKIISRVSDKLKQIPHFVADANSTDPALLLSENASLLSLSELDSTFSHLRSRLHNLSLQLGVEPAMESQEAGAEKPSQQAGAGTRRHVLLMATTRTGSSFVGEFFNQQGNIFYLFEPLWHIERTVFFQQRGASAAGSALVYRDVLKQLLLCDLYVLEPFISPPPEDHLTQFLFRRGSSRSLCEDPVCTPFVKKVFEKYHCRNRRCGPLNVTLAGEACRRKDHVALKAVRIRQLEFLQPLVEDPRLDLRVIQLVRDPRAVLASRIVAFAGKYENWKKWLSEGQDQLSEDEVQRLRGNCESIRLSAELGLRQPAWLRGRYMLVRYEDVARRPLQKAREMYSFAGIPLTPQVEDWIQKNTQATRDSSDVYSTQKNSSEQFEKWRFSMPFKLAQVVQAACGPTMHLFGYKLARDAASLTNRSISLLEERGTFWVT.

At 1 to 19 (MEKGLALPQDFRDLVHSLK) the chain is on the cytoplasmic side. Residues 20-38 (IRGRYVLFLAFVVIVFIFI) traverse the membrane as a helical; Signal-anchor for type II membrane protein segment. Topologically, residues 39–472 (EKENKIISRV…LEERGTFWVT (434 aa)) are lumenal. N-linked (GlcNAc...) asparagine glycosylation is found at asparagine 63, asparagine 74, and asparagine 96. 135 to 141 (TRTGSSF) contacts 3'-phosphoadenylyl sulfate. The N-linked (GlcNAc...) asparagine glycan is linked to asparagine 250. 295 to 303 (RDPRAVLAS) contacts 3'-phosphoadenylyl sulfate. Asparagine 413 and asparagine 457 each carry an N-linked (GlcNAc...) asparagine glycan.

The protein belongs to the sulfotransferase 1 family. Gal/GlcNAc/GalNAc subfamily. In terms of processing, N-glycosylated. Widely expressed. Highly expressed in spleen, lung, eye and stomach. Constitutively expressed at low level during the mid- to late-gestation period. Expressed in the brain in a temporally controlled manner: peaks at 2 weeks after birth in the cerebellum, but at 3 weeks in the cerebrum. Localizes to stromal cells in the bone marrow, and stromal cells in the marginal zone and red pulp of the spleen, but the sense probe did not.

It localises to the golgi apparatus membrane. The catalysed reaction is chondroitin beta-D-glucuronate + n 3'-phosphoadenylyl sulfate = chondroitin 6'-sulfate + n adenosine 3',5'-bisphosphate + n H(+). It carries out the reaction 3'-phosphoadenylyl sulfate + keratan = adenosine 3',5'-bisphosphate + keratan 6'-sulfate.. Its function is as follows. Sulfotransferase that utilizes 3'-phospho-5'-adenylyl sulfate (PAPS) as sulfonate donor to catalyze the transfer of sulfate to position 6 of the N-acetylgalactosamine (GalNAc) residue of chondroitin. Chondroitin sulfate constitutes the predominant proteoglycan present in cartilage and is distributed on the surfaces of many cells and extracellular matrices. Catalyzes with a lower efficiency the sulfation of Gal residues of keratan sulfate, another glycosaminoglycan. Can also catalyze the sulfation of the Gal residues in sialyl N-acetyllactosamine (sialyl LacNAc) oligosaccharides. May play a role in the maintenance of naive T-lymphocytes in the spleen. This Mus musculus (Mouse) protein is Carbohydrate sulfotransferase 3 (Chst3).